The primary structure comprises 739 residues: Polyribonucleotide nucleotidyltransferase (739 aa).

Residues aspartate 514 and aspartate 520 each coordinate Mg(2+). Residues 580–639 (PRIITVKIPVDKIGEVIGPKGKMINQIQEDTGADITIEDDGTIYIGAAQGSQAEAARATI) enclose the KH domain. The S1 motif domain maps to 651-723 (GERYLGTVVK…SRGKLSLIPV (73 aa)).

Belongs to the polyribonucleotide nucleotidyltransferase family. It depends on Mg(2+) as a cofactor.

It localises to the cytoplasm. The catalysed reaction is RNA(n+1) + phosphate = RNA(n) + a ribonucleoside 5'-diphosphate. In terms of biological role, involved in mRNA degradation. Catalyzes the phosphorolysis of single-stranded polyribonucleotides processively in the 3'- to 5'-direction. This chain is Polyribonucleotide nucleotidyltransferase, found in Streptomyces coelicolor (strain ATCC BAA-471 / A3(2) / M145).